A 331-amino-acid polypeptide reads, in one-letter code: Holliday junction branch migration complex subunit RuvB (331 aa).

The segment at methionine 1 to tyrosine 186 is large ATPase domain (RuvB-L). Residues isoleucine 25, arginine 26, glycine 67, lysine 70, threonine 71, threonine 72, glutamate 133–phenylalanine 135, arginine 176, tyrosine 186, and arginine 223 contribute to the ATP site. Residue threonine 71 participates in Mg(2+) binding. The small ATPAse domain (RuvB-S) stretch occupies residues asparagine 187–alanine 257. The segment at arginine 260–leucine 331 is head domain (RuvB-H). The DNA site is built by arginine 296, arginine 315, and arginine 320.

The protein belongs to the RuvB family. Homohexamer. Forms an RuvA(8)-RuvB(12)-Holliday junction (HJ) complex. HJ DNA is sandwiched between 2 RuvA tetramers; dsDNA enters through RuvA and exits via RuvB. An RuvB hexamer assembles on each DNA strand where it exits the tetramer. Each RuvB hexamer is contacted by two RuvA subunits (via domain III) on 2 adjacent RuvB subunits; this complex drives branch migration. In the full resolvosome a probable DNA-RuvA(4)-RuvB(12)-RuvC(2) complex forms which resolves the HJ.

It localises to the cytoplasm. It carries out the reaction ATP + H2O = ADP + phosphate + H(+). Its function is as follows. The RuvA-RuvB-RuvC complex processes Holliday junction (HJ) DNA during genetic recombination and DNA repair, while the RuvA-RuvB complex plays an important role in the rescue of blocked DNA replication forks via replication fork reversal (RFR). RuvA specifically binds to HJ cruciform DNA, conferring on it an open structure. The RuvB hexamer acts as an ATP-dependent pump, pulling dsDNA into and through the RuvAB complex. RuvB forms 2 homohexamers on either side of HJ DNA bound by 1 or 2 RuvA tetramers; 4 subunits per hexamer contact DNA at a time. Coordinated motions by a converter formed by DNA-disengaged RuvB subunits stimulates ATP hydrolysis and nucleotide exchange. Immobilization of the converter enables RuvB to convert the ATP-contained energy into a lever motion, pulling 2 nucleotides of DNA out of the RuvA tetramer per ATP hydrolyzed, thus driving DNA branch migration. The RuvB motors rotate together with the DNA substrate, which together with the progressing nucleotide cycle form the mechanistic basis for DNA recombination by continuous HJ branch migration. Branch migration allows RuvC to scan DNA until it finds its consensus sequence, where it cleaves and resolves cruciform DNA. This chain is Holliday junction branch migration complex subunit RuvB, found in Psychrobacter cryohalolentis (strain ATCC BAA-1226 / DSM 17306 / VKM B-2378 / K5).